Consider the following 811-residue polypeptide: MADIIGGEVVTELVRQLYAVSQKTLRCRGIAKNLATMIDGLQPTIKEIQYSGVELTPHRQAQLRMFSETLDKCRKLTEKVLKSSRWNMVRQLLHVRKMENLQSKVSSFLNGQLLVHVLADVHHVRADSEFRFDRIDRKVDSLNEKLGSMKLRGSESLREALKTAEATVEMVTTDGADLGVGLDLGKRKVKEMLFKSIDGERLIGISGMSGSGKTTLAKELARDEEVRGHFGNKVLFLTVSQSPNLEELRAHIWGFLTSYEAGVGATLPESRKLVILDDVWTRESLDQLMFENIPGTTTLVVSRSKLADSRVTYDVELLNEHEATALFCLSVFNQKLVPSGFSQSLVKQVVGECKGLPLSLKVIGASLKERPEKYWEGAVERLSRGEPADETHESRVFAQIEATLENLDPKTRDCFLVLGAFPEDKKIPLDVLINVLVELHDLEDATAFAVIVDLANRNLLTLVKDPRFGHMYTSYYDIFVTQHDVLRDVALRLSNHGKVNNRERLLMPKRESMLPREWERNNDEPYKARVVSIHTGEMTQMDWFDMELPKAEVLILHFSSDKYVLPPFIAKMGKLTALVIINNGMSPARLHDFSIFTNLAKLKSLWLQRVHVPELSSSTVPLQNLHKLSLIFCKINTSLDQTELDIAQIFPKLSDLTIDHCDDLLELPSTICGITSLNSISITNCPRIKELPKNLSKLKALQLLRLYACHELNSLPVEICELPRLKYVDISQCVSLSSLPEKIGKVKTLEKIDTRECSLSSIPNSVVLLTSLRHVICDREALWMWEKVQKAVAGLRVEAAEKSFSRDWLDD.

The RPW8 domain occupies 1–147 (MADIIGGEVV…KVDSLNEKLG (147 aa)). NB-ARC domains are found at residues 180 to 242 (VGLD…VSQS) and 312 to 437 (TYDV…NVLV). Residue 207-214 (GMSGSGKT) participates in ATP binding. 5 LRR repeats span residues 650-674 (FPKLSDLTIDHCDDLLELPSTICGI), 676-699 (SLNSISITNCPRIKELPKNLSKLK), 700-722 (ALQLLRLYACHELNSLPVEICEL), 724-746 (RLKYVDISQCVSLSSLPEKIGKV), and 748-769 (TLEKIDTRECSLSSIPNSVVLL).

This sequence belongs to the disease resistance NB-LRR family.

Its function is as follows. Probable disease resistance protein. This Arabidopsis thaliana (Mouse-ear cress) protein is Probable disease resistance protein At5g04720.